Consider the following 537-residue polypeptide: Protein pns1 (537 aa).

Residues 1 to 16 (MSGQAASYYNPSQSYG) are compositionally biased toward polar residues. The tract at residues 1–35 (MSGQAASYYNPSQSYGDFQPGMQNPQQQPDYYNNN) is disordered. Residues 1 to 81 (MSGQAASYYN…FKIERPKYHD (81 aa)) are Cytoplasmic-facing. Residues 23–35 (QNPQQQPDYYNNN) show a composition bias toward low complexity. The chain crosses the membrane as a helical span at residues 82–102 (IWAGLLFIAVFLGYVAVSGVA). Residues 103–130 (IHRYAKYKGLNGDGIYDSSNSFSLDTNT) are Extracellular-facing. A helical transmembrane segment spans residues 131–151 (LILFIFVLCVALAFSYAYFLG). Over 152–158 (ARYFSKL) the chain is Cytoplasmic. A helical membrane pass occupies residues 159 to 179 (FIWVTGILNIVFALATGIYYI). The Extracellular segment spans residues 180–184 (ARKQY). Residues 185–205 (GGGIVFLLFGVFAIICFISWI) traverse the membrane as a helical segment. Residues 206 to 227 (PRIPFSAFMLQTSIDVSRKYGH) lie on the Cytoplasmic side of the membrane. The chain crosses the membrane as a helical span at residues 228-248 (MFIVSTIGGLVAVAFAAWFSV). Topologically, residues 249-275 (TLVSIYVAYEPSSSGSNPSCSDGGCSR) are extracellular. The helical transmembrane segment at 276–296 (ARVIGLVVYVTFAMYWFSEWL) threads the bilayer. Residues 297–333 (KNTIHTTIAGVYGSWYFWSQSPNGMPRGSTRGAFRRA) lie on the Cytoplasmic side of the membrane. The chain crosses the membrane as a helical span at residues 334-354 (TTYSFGSVSFGSLIIAIINML). Residues 355–370 (RQACSVAQRNEAAEGS) are Extracellular-facing. Residues 371 to 391 (IVGSIMFWILGCFIAILDWLV) traverse the membrane as a helical segment. Residues 392–432 (TLFNRYAFCHIALYGKAYIPAAKDTWTMMRDRGIDALVNDC) lie on the Cytoplasmic side of the membrane. The helical transmembrane segment at 433–453 (LIGPVLTMGSVFVSYVCALLA) threads the bilayer. Residues 454 to 469 (YLYLQFTKPSYNADGN) are Extracellular-facing. Asn469 is a glycosylation site (N-linked (GlcNAc...) asparagine). The chain crosses the membrane as a helical span at residues 470–490 (FTAVIMAFAFVIGLQICQIFM). The Cytoplasmic portion of the chain corresponds to 491-537 (TPVSSGIETIFVAMGWDPQVMIRDHPDLYYRMIQVYPRVQQAIQPSA).

It belongs to the CTL (choline transporter-like) family.

The protein resides in the cell membrane. Functionally, probably involved in transport through the plasma membrane. The protein is Protein pns1 (pns1) of Aspergillus fumigatus (strain ATCC MYA-4609 / CBS 101355 / FGSC A1100 / Af293) (Neosartorya fumigata).